We begin with the raw amino-acid sequence, 291 residues long: Beta-lactamase OXY-1 (291 aa).

An N-terminal signal peptide occupies residues 1–24 (MLKSSWRKTALMAAAAVPLLLASG). Ser73 serves as the catalytic Acyl-ester intermediate. 237 to 239 (KTG) provides a ligand contact to substrate.

Belongs to the class-A beta-lactamase family.

The catalysed reaction is a beta-lactam + H2O = a substituted beta-amino acid. In terms of biological role, hydrolyzes broad-spectrum beta-lactam antibiotics. Active against cephalosporins. The chain is Beta-lactamase OXY-1 (bla) from Klebsiella oxytoca.